We begin with the raw amino-acid sequence, 198 residues long: Large ribosomal subunit protein bL25 (198 aa).

It belongs to the bacterial ribosomal protein bL25 family. CTC subfamily. In terms of assembly, part of the 50S ribosomal subunit; part of the 5S rRNA/L5/L18/L25 subcomplex. Contacts the 5S rRNA. Binds to the 5S rRNA independently of L5 and L18.

This is one of the proteins that binds to the 5S RNA in the ribosome where it forms part of the central protuberance. This Azotobacter vinelandii (strain DJ / ATCC BAA-1303) protein is Large ribosomal subunit protein bL25.